A 208-amino-acid chain; its full sequence is High frequency lysogenization protein HflD homolog (208 aa).

It belongs to the HflD family.

It localises to the cytoplasm. Its subcellular location is the cell inner membrane. This is High frequency lysogenization protein HflD homolog from Yersinia pestis bv. Antiqua (strain Nepal516).